A 912-amino-acid polypeptide reads, in one-letter code: Collagen alpha-2(I) chain (912 aa).

A compositionally biased stretch (low complexity) spans 1-41; it reads GPMGIMGPRGPPGASGAPGPQGFQGPAGEPGEPGQTGPAGA. Disordered stretches follow at residues 1 to 206, 222 to 739, and 763 to 912; these read GPMG…GITG, IPGP…GIIG, and GPPG…RGSQ. Over residues 43–57 the composition is skewed to basic and acidic residues; that stretch reads AGEDGHPGKPGRPGE. Low complexity-rich tracts occupy residues 124–153, 178–192, 229–244, 295–327, 360–382, and 406–424; these read VGAPGPAGARGSDGSVGPVGPAGPIGSAGP, AGPRGEVGIPGISGP, PGPAGAAGATGARGIV, PGIRGIPGADGRAGVMGPAGSRGASGPAGVRGP, PVGIPGIDGRPGPIGPAGARGEP, and AGIAGARGAPGPDGNNGAQ. Gly residues predominate over residues 431-440; sequence GVQGGKGEQG. Composition is skewed to low complexity over residues 474–501 and 517–532; these read IPGPAGARGPPGESGAAGPAGPIGSRGP and IGAPGTAGPSGPSGIP. A compositionally biased stretch (gly residues) spans 539–548; that stretch reads GIPGGKGEIG. 2 stretches are compositionally biased toward low complexity: residues 549–612 and 622–637; these read NPGR…QPGA and NGPVGPTGPVGAAGPS. Residues 647–656 show a composition bias toward gly residues; the sequence is GSRGDGGPPG. Composition is skewed to low complexity over residues 658–667, 728–739, 763–785, 805–815, and 830–850; these read TGFPGAAGRT, PQGIIGAPGIIG, GPPGARGPPGAVGAPGVNGAPGE, NAGPVGAVGAP, and PGPVGSVGPVGAVGPRGPSGP.

The protein belongs to the fibrillar collagen family. As to quaternary structure, trimers of one alpha 2(I) and two alpha 1(I) chains. Interacts (via C-terminus) with TMEM131 (via PapD-L domain); the interaction is direct and is involved in assembly and TRAPPIII ER-to-Golgi transport complex-dependent secretion of collagen. Prolines at the third position of the tripeptide repeating unit (G-X-Y) are hydroxylated in some or all of the chains. In terms of tissue distribution, forms the fibrils of tendon, ligaments and bones. In bones, the fibrils are mineralized with calcium hydroxyapatite.

The protein localises to the secreted. Its subcellular location is the extracellular space. It localises to the extracellular matrix. In terms of biological role, type I collagen is a member of group I collagen (fibrillar forming collagen). The protein is Collagen alpha-2(I) chain of Equus sp.